The sequence spans 200 residues: Chromophore lyase CpcS/CpeS (200 aa).

The protein belongs to the CpcS/CpeS biliprotein lyase family.

Its function is as follows. Covalently attaches a chromophore to Cys residue(s) of phycobiliproteins. This Synechococcus sp. (strain WH8020) protein is Chromophore lyase CpcS/CpeS.